Here is a 360-residue protein sequence, read N- to C-terminus: Nucleoporin SEH1 (360 aa).

WD repeat units follow at residues 10–49 (DHKDLIHDVSFDFHGRRMATCSSDQSVKVWDKSESGEWHC), 55–96 (THSG…SNDK), 111–152 (DSRT…NLSQ), 160–210 (SCKL…RKYA), 217–258 (TVTD…KELT), and 276–315 (NHNSQVWRVSWNITGTVLASSGDDGCVRLWKANYMDNWKC). Residue Lys-12 forms a Glycyl lysine isopeptide (Lys-Gly) (interchain with G-Cter in SUMO2) linkage. Position 190 is a phosphoserine (Ser-190). A compositionally biased stretch (low complexity) spans 324 to 342 (SPVNGSSQQGNSNPSVGSN). The interval 324–360 (SPVNGSSQQGNSNPSVGSNIPSLQNSLNGSSAGRKHS) is disordered. The segment covering 343-354 (IPSLQNSLNGSS) has biased composition (polar residues).

It belongs to the WD repeat SEC13 family. Component of the Nup107-160 subcomplex of the nuclear pore complex (NPC). The Nup107-160 subcomplex includes NUP160, NUP133, NUP107, NUP98, NUP85, NUP43, NUP37, SEH1 and SEC13. The SEH1 subunit appears to be only weakly associated with the Nup107-160 subcomplex. Component of the GATOR2 subcomplex, composed of MIOS, SEC13, SEH1L, WDR24 and WDR59. The GATOR2 complex interacts with CASTOR1 and CASTOR2; the interaction is negatively regulated by arginine. The GATOR2 complex interacts with SESN1, SESN2 and SESN3; the interaction is negatively regulated by amino acids. SESN1, SESN2 and SESN3 convey leucine availability via direct interaction with SEH1L and WDR24.

The protein localises to the chromosome. Its subcellular location is the centromere. The protein resides in the kinetochore. It is found in the nucleus. It localises to the nuclear pore complex. The protein localises to the lysosome membrane. With respect to regulation, the GATOR2 complex is negatively regulated by the upstream amino acid sensors CASTOR1 and SESN2, which sequester the GATOR2 complex in absence of amino acids. In the presence of abundant amino acids, GATOR2 is released from CASTOR1 and SESN2 and activated. Component of the Nup107-160 subcomplex of the nuclear pore complex (NPC). The Nup107-160 subcomplex is required for the assembly of a functional NPC. The Nup107-160 subcomplex is also required for normal kinetochore microtubule attachment, mitotic progression and chromosome segregation. This subunit plays a role in recruitment of the Nup107-160 subcomplex to the kinetochore. Its function is as follows. As a component of the GATOR2 complex, functions as an activator of the amino acid-sensing branch of the mTORC1 signaling pathway. The GATOR2 complex indirectly activates mTORC1 through the inhibition of the GATOR1 subcomplex. GATOR2 probably acts as an E3 ubiquitin-protein ligase toward GATOR1. In the presence of abundant amino acids, the GATOR2 complex mediates ubiquitination of the NPRL2 core component of the GATOR1 complex, leading to GATOR1 inactivation. In the absence of amino acids, GATOR2 is inhibited, activating the GATOR1 complex. Within the GATOR2 complex, SEC13 and SEH1L are required to stabilize the complex. The polypeptide is Nucleoporin SEH1 (SEH1L) (Bos taurus (Bovine)).